The following is a 201-amino-acid chain: Large ribosomal subunit protein uL4 (201 aa).

The tract at residues Ala45–Gly71 is disordered.

This sequence belongs to the universal ribosomal protein uL4 family. As to quaternary structure, part of the 50S ribosomal subunit.

One of the primary rRNA binding proteins, this protein initially binds near the 5'-end of the 23S rRNA. It is important during the early stages of 50S assembly. It makes multiple contacts with different domains of the 23S rRNA in the assembled 50S subunit and ribosome. Functionally, forms part of the polypeptide exit tunnel. The chain is Large ribosomal subunit protein uL4 from Shewanella halifaxensis (strain HAW-EB4).